A 399-amino-acid chain; its full sequence is Ras-related GTP-binding protein C (399 aa).

Residues 1-20 (MSLQYGAEETPLAGSYGAAD) are disordered. The residue at position 2 (serine 2) is an N-acetylserine. Serine 2 and serine 15 each carry phosphoserine. Positions 71, 72, 73, 74, 75, 76, 90, 94, 96, 178, 179, 181, 219, and 220 each coordinate GDP. Lysine 74 lines the GTP pocket. Threonine 90 contacts GTP. Residue threonine 96 participates in GTP binding. Threonine 96 is modified (phosphothreonine). Aspartate 181 lines the GTP pocket.

This sequence belongs to the GTR/RAG GTP-binding protein family. Forms a heterodimer with RRAGA, in a sequence-independent manner, and RRAGB. Heterodimerization stabilizes proteins of the heterodimer. The GDP-bound form of RRAGC (in complex with the GTP-bound form of RRAGA or RRAGB), interacts with RPTOR, thereby promoting recruitment of mTORC1 to the lysosomes. Component of the lysosomal folliculin complex (LFC), composed of FLCN, FNIP1 (or FNIP2), RagA/RRAGA or RagB/RRAGB GDP-bound, RagC/RRAGC or RagD/RRAGD GTP-bound, and Ragulator. Interacts with NOL8. Interacts with SH3BP4; the interaction with this negative regulator is most probably direct, preferentially occurs with the inactive GDP-bound form of RRAGB, is negatively regulated by amino acids and prevents interaction with RPTOR. The Rag heterodimer interacts with SLC38A9; the probable amino acid sensor. Interacts with SESN1, SESN2 and SESN3. Interacts with PIP4P1. The Rag heterodimer interacts with the Ragulator complex. The GDP-bound form interacts with TFEB. The GDP-bound form interacts with TFE3.

The protein resides in the cytoplasm. The protein localises to the nucleus. Its subcellular location is the lysosome membrane. It carries out the reaction GTP + H2O = GDP + phosphate + H(+). With respect to regulation, the activation of RagC/RRAGC is mediated by a GTPase activating protein (GAP). In high-amino acid conditions, activated by GTPase activating protein FLCN that stimulates RRAGC GTPase activity to turn it into its active GDP-bound form. In response to amino acid depletion, the GATOR1 complex inactivates RagC/RRAGC by securing the GTP-bound inactive form. Functionally, guanine nucleotide-binding protein that plays a crucial role in the cellular response to amino acid availability through regulation of the mTORC1 signaling cascade. Forms heterodimeric Rag complexes with RagA/RRAGA or RagB/RRAGB and cycles between an inactive GTP-bound and an active GDP-bound form: RagC/RRAGC is in its active form when GDP-bound RagC/RRAGC forms a complex with GTP-bound RagA/RRAGA (or RagB/RRAGB) and in an inactive form when GTP-bound RagC/RRAGC heterodimerizes with GDP-bound RagA/RRAGA (or RagB/RRAGB). In its GDP-bound active form, promotes the recruitment of mTORC1 to the lysosomes and its subsequent activation by the GTPase RHEB. This is a crucial step in the activation of the MTOR signaling cascade by amino acids. Also plays a central role in the non-canonical mTORC1 complex, which acts independently of RHEB and specifically mediates phosphorylation of MiT/TFE factors TFEB and TFE3: GDP-bound RagC/RRAGC mediates recruitment of MiT/TFE factors TFEB and TFE3. The polypeptide is Ras-related GTP-binding protein C (Homo sapiens (Human)).